The primary structure comprises 165 residues: Large ribosomal subunit protein uL10 (165 aa).

N6-acetyllysine is present on residues K37 and K105.

This sequence belongs to the universal ribosomal protein uL10 family. In terms of assembly, part of the ribosomal stalk of the 50S ribosomal subunit. The N-terminus interacts with L11 and the large rRNA to form the base of the stalk. The C-terminus forms an elongated spine to which L12 dimers bind in a sequential fashion forming a multimeric L10(L12)X complex.

In terms of biological role, protein L10 is also a translational repressor protein. It controls the translation of the rplJL-rpoBC operon by binding to its mRNA. Forms part of the ribosomal stalk, playing a central role in the interaction of the ribosome with GTP-bound translation factors. This is Large ribosomal subunit protein uL10 (rplJ) from Escherichia coli O6:H1 (strain CFT073 / ATCC 700928 / UPEC).